A 101-amino-acid polypeptide reads, in one-letter code: Protein mes1 (101 aa).

The segment covering 1 to 19 (MVNTDNKENEPPNMEKAHM) has biased composition (basic and acidic residues). The disordered stretch occupies residues 1-101 (MVNTDNKENE…RSPNPLLSMR (101 aa)).

In terms of assembly, interacts with slp1.

Its subcellular location is the cytoplasm. The protein resides in the nucleus. In terms of biological role, specifically required for meiosis II (MII). Binds to slp1, an activator of the anapahase promoting complex/cyclcosome (APC/C), and counteracts its function in promoting proteolysis of cdc13. By suppressing the degradation of cdc13 at anaphase I this protein may help maintain a sufficient level of cdc2 kinase activity to complete MII. The protein is Protein mes1 (mes1) of Schizosaccharomyces pombe (strain 972 / ATCC 24843) (Fission yeast).